A 52-amino-acid chain; its full sequence is Alpha-1-antiproteinase 3 (52 aa).

The interval 1 to 20 (EDLQGDAVPEEXATKDDNEH) is disordered.

Belongs to the serpin family. Post-translationally, N-glycosylated; contains glycans with bi- and triantennary side chains. As to expression, plasma.

The protein localises to the secreted. This is Alpha-1-antiproteinase 3 from Equus caballus (Horse).